The primary structure comprises 359 residues: MNIYDQLQAVEDRYEELGELLSDPDVVSDTKRFMELSKEEASNRDTVIAYREYKQVLQNIVDAEEMIKESGGDADLEEMAKQELKDAKAEKEEYEEKLKILLLPKDPNDDKNIILEIRGAAGGDEAALFAGDLLTMYQKYAEAQGWRFEVMEASMNGVGGFKEVVAMVSGQSVYSKLKYESGAHRVQRVPVTESQGRVHTSTATVLVMPEVEEVEXDIDPKDLRVDIYHASGAGGQNVNKVATAVRIVHLPTNIKVEMQEERTQQKNREKAMKIIRARVADHFAQIAQDEQDAERKSTIGTGDRSERIRTYNFPQNRVTDHRIGLTLQKLDTILSGKLDEVVDALVLYDQTQKLEELNK.

Gln236 is subject to N5-methylglutamine.

The protein belongs to the prokaryotic/mitochondrial release factor family. In terms of processing, methylated by PrmC. Methylation increases the termination efficiency of RF1.

It localises to the cytoplasm. Its function is as follows. Peptide chain release factor 1 directs the termination of translation in response to the peptide chain termination codons UAG and UAA. This Streptococcus pneumoniae serotype 19F (strain G54) protein is Peptide chain release factor 1.